A 257-amino-acid chain; its full sequence is Global transcriptional regulator CodY (257 aa).

The GAF domain stretch occupies residues 1–155 (MSLLSKTREL…AATVIGMEIL (155 aa)). The H-T-H motif DNA-binding region spans 203 to 222 (ASKVADRVGITRSVIVNALR).

This sequence belongs to the CodY family.

It is found in the cytoplasm. Its function is as follows. DNA-binding global transcriptional regulator which is involved in the adaptive response to starvation and acts by directly or indirectly controlling the expression of numerous genes in response to nutrient availability. During rapid exponential growth, CodY is highly active and represses genes whose products allow adaptation to nutrient depletion. This Staphylococcus haemolyticus (strain JCSC1435) protein is Global transcriptional regulator CodY.